The primary structure comprises 75 residues: Putative membrane protein insertion efficiency factor (75 aa).

Belongs to the UPF0161 family.

The protein localises to the cell membrane. Its function is as follows. Could be involved in insertion of integral membrane proteins into the membrane. This is Putative membrane protein insertion efficiency factor from Bacillus cytotoxicus (strain DSM 22905 / CIP 110041 / 391-98 / NVH 391-98).